A 155-amino-acid polypeptide reads, in one-letter code: Histone H2B.4 (155 aa).

Residues 1–28 are compositionally biased toward basic and acidic residues; the sequence is MAPKTKEEKPASEAVEPKAEAKPKAEKA. Positions 1-62 are disordered; sequence MAPKTKEEKP…GDKKKKKAKV (62 aa). The segment covering 29-40 has biased composition (basic residues); that stretch reads PKKKEKKAPAKK. A Glycyl lysine isopeptide (Lys-Gly) (interchain with G-Cter in ubiquitin) cross-link involves residue Lys151.

The protein belongs to the histone H2B family. In terms of assembly, the nucleosome is a histone octamer containing two molecules each of H2A, H2B, H3 and H4 assembled in one H3-H4 heterotetramer and two H2A-H2B heterodimers. The octamer wraps approximately 147 bp of DNA. Post-translationally, monoubiquitinated to form H2BK143ub1; may give a specific tag for epigenetic transcriptional activation.

It is found in the nucleus. The protein localises to the chromosome. Its function is as follows. Core component of nucleosome. Nucleosomes wrap and compact DNA into chromatin, limiting DNA accessibility to the cellular machineries which require DNA as a template. Histones thereby play a central role in transcription regulation, DNA repair, DNA replication and chromosomal stability. DNA accessibility is regulated via a complex set of post-translational modifications of histones, also called histone code, and nucleosome remodeling. This Volvox carteri (Green alga) protein is Histone H2B.4.